A 27-amino-acid chain; its full sequence is Pregnancy-associated glycoprotein 59 (27 aa).

It belongs to the peptidase A1 family. Glycosylated. As to expression, placenta.

The sequence is that of Pregnancy-associated glycoprotein 59 (PAG59) from Capra hircus (Goat).